The sequence spans 591 residues: Probable anion transporter 4, chloroplastic (591 aa).

A disordered region spans residues 1-38; sequence MAMGAVLSSRTFASPLSSSGKQHPPQNNKCTCSSPPTR. Residues 1-76 constitute a chloroplast transit peptide; the sequence is MAMGAVLSSR…LSARFHQPVV (76 aa). A compositionally biased stretch (polar residues) spans 8 to 36; that stretch reads SSRTFASPLSSSGKQHPPQNNKCTCSSPP. Transmembrane regions (helical) follow at residues 184–204, 220–240, 249–269, 271–291, 313–333, 336–356, 402–422, 440–460, 475–495, 531–551, and 565–585; these read VVLLCFFSFLLCNMDRVNMSI, VGLIQSSFFWGYLLTQILGGI, VVLGFGVVWWSIATVLTPLAA, IGLPFLLVMRAFMGIGEGVAM, LVYSGMYLGSVTGLAFSPLLI, FGWPSVFYAFGSLGSVWFALW, VWALIVSHFCHNWGTFILLTW, LLCVLPWLTMAIFANIGGWIA, KIMQSIGFLGPALFLTLLSKV, AGVLLGLSNTAGVLAGVFGTA, and VFQVAVVLYIVGTVVWNVFST.

Belongs to the major facilitator superfamily. Sodium/anion cotransporter (TC 2.A.1.14) family.

The protein resides in the plastid. The protein localises to the chloroplast membrane. In terms of biological role, probable anion transporter. In Oryza sativa subsp. japonica (Rice), this protein is Probable anion transporter 4, chloroplastic (PHT4;4).